A 1118-amino-acid chain; its full sequence is Cytospin-A (1118 aa).

The disordered stretch occupies residues 1–176 (MKKASRSVGS…SKSKSDNQIS (176 aa)). Polar residues predominate over residues 29–52 (ESGSSLSAVTKLSKPGTSASLLKT). The span at 79-119 (STCASTVSSTTGTTMSTLENKPRTVAGSTARRSTSSGTKES) shows a compositional bias: low complexity. 2 stretches are compositionally biased toward basic and acidic residues: residues 120–131 (SSSRERIRDRSR) and 158–171 (TNPESDIRMSKSKS). Positions 193–281 (KTKDVEILHL…LNALGFSLEQ (89 aa)) form a coiled coil. Disordered regions lie at residues 299 to 324 (ITAGNHSDGGGTLTSSVEGSAPGSME) and 359 to 391 (SSDDALDAPSSSESEGVPSIERSRKGSSGNASE). The span at 359-373 (SSDDALDAPSSSESE) shows a compositional bias: low complexity. Coiled-coil stretches lie at residues 396–450 (CLTE…MESL) and 488–808 (RYME…RGRV). Disordered stretches follow at residues 856 to 879 (PSPAAATIPRTPLSPSPMKTPPAA) and 921 to 1002 (TSST…RKDP). Positions 937–946 (ESAKSISVSR) are enriched in low complexity. Basic and acidic residues predominate over residues 947-957 (RSSEEIKRDIS). Over residues 972–991 (TTSPQLSLSSSPTASVTPTT) the composition is skewed to low complexity. Positions 1012-1117 (GSKRNALLKW…YVTAIYKYFE (106 aa)) constitute a Calponin-homology (CH) domain.

Belongs to the cytospin-A family. In terms of assembly, may interact with both microtubules and actin cytoskeleton.

The protein resides in the cytoplasm. It localises to the cytoskeleton. Its subcellular location is the spindle. It is found in the cell junction. The protein localises to the gap junction. Involved in cytokinesis and spindle organization. May play a role in actin cytoskeleton organization and microtubule stabilization and hence required for proper cell adhesion and migration. This is Cytospin-A (SPECC1L) from Gallus gallus (Chicken).